Here is a 218-residue protein sequence, read N- to C-terminus: Antifreeze protein Maxi (218 aa).

Positions 1–23 are cleaved as a signal peptide; that stretch reads MALSLFTVGQFIFLFWTISITEA.

This sequence belongs to the type-I AFP family. Homodimer. In terms of tissue distribution, detected in blood serum (at protein level). Detected in liver.

The protein localises to the secreted. Its function is as follows. Contributes to protect fish blood from freezing at subzero sea water temperatures. Lowers the blood freezing point by about 1.1 degrees at a concentration of 0.1 mg/ml, and by about 1.5 degrees at a concentration of 0.2 mg/ml. Binds to nascent ice crystals and prevents further growth. This Pseudopleuronectes americanus (Winter flounder) protein is Antifreeze protein Maxi.